Consider the following 344-residue polypeptide: MRSKNDTILKAIKGESTSHTPVWFMRQAGRSQPEYRKLKEKYSLFEITHQPELCAYVTHLPVDNYQTDAAVLYKDIMTPLKPIGVDVEIKSGIGPVISNPIQTVKDVERLSQIDPKRDVPYVLDTIKLLTEEKLNVPLIGFTGAPFTLASYMIEGGPSKNYNFTKAMMYRDEETWFALMNHLVDISIDYVVAQVEAGAEIIQIFDSWVGALNVKDYRYYIKPAMNKLISGIKAYYDVPIILFGVGASHLINEWNDLPIDVLGLDWRTTIKQADKMGVNKAIQGNLDPSVLLAPWDVIESRLKDILNQGLNRGKHIFNLGHGVFPEVKPETLRKVTEFVHNYTAK.

Residues 26 to 30 (RQAGR), Phe-45, Asp-75, Tyr-151, Ser-206, and His-320 each bind substrate.

This sequence belongs to the uroporphyrinogen decarboxylase family. Homodimer.

Its subcellular location is the cytoplasm. It catalyses the reaction uroporphyrinogen III + 4 H(+) = coproporphyrinogen III + 4 CO2. It functions in the pathway porphyrin-containing compound metabolism; protoporphyrin-IX biosynthesis; coproporphyrinogen-III from 5-aminolevulinate: step 4/4. Functionally, catalyzes the decarboxylation of four acetate groups of uroporphyrinogen-III to yield coproporphyrinogen-III. This chain is Uroporphyrinogen decarboxylase, found in Staphylococcus epidermidis (strain ATCC 35984 / DSM 28319 / BCRC 17069 / CCUG 31568 / BM 3577 / RP62A).